The chain runs to 328 residues: Malate dehydrogenase (328 aa).

Position 11-17 (11-17) interacts with NAD(+); the sequence is GAAGQIG. Arginine 94 and arginine 100 together coordinate substrate. Residues asparagine 107, glutamine 114, and 131–133 contribute to the NAD(+) site; that span reads VGN. Substrate contacts are provided by asparagine 133 and arginine 164. Histidine 189 functions as the Proton acceptor in the catalytic mechanism.

It belongs to the LDH/MDH superfamily. MDH type 2 family.

The enzyme catalyses (S)-malate + NAD(+) = oxaloacetate + NADH + H(+). Functionally, catalyzes the reversible oxidation of malate to oxaloacetate. The sequence is that of Malate dehydrogenase from Xylella fastidiosa (strain M23).